Consider the following 350-residue polypeptide: Hydroxymethylglutaryl-CoA synthase (350 aa).

E83 functions as the Proton donor/acceptor in the catalytic mechanism. The active-site Acyl-thioester intermediate is C115. Positions 115 and 156 each coordinate (3S)-3-hydroxy-3-methylglutaryl-CoA. R204 provides a ligand contact to CoA. (3S)-3-hydroxy-3-methylglutaryl-CoA is bound by residues T206 and H239. The active-site Proton donor/acceptor is the H239. K244 contributes to the CoA binding site. 2 residues coordinate (3S)-3-hydroxy-3-methylglutaryl-CoA: N271 and S301.

The protein belongs to the thiolase-like superfamily. Archaeal HMG-CoA synthase family. In terms of assembly, interacts with acetoacetyl-CoA thiolase that catalyzes the precedent step in the pathway and with a DUF35 protein. The acetoacetyl-CoA thiolase/HMG-CoA synthase complex channels the intermediate via a fused CoA-binding site, which allows for efficient coupling of the endergonic thiolase reaction with the exergonic HMGCS reaction.

The enzyme catalyses acetoacetyl-CoA + acetyl-CoA + H2O = (3S)-3-hydroxy-3-methylglutaryl-CoA + CoA + H(+). Its pathway is metabolic intermediate biosynthesis; (R)-mevalonate biosynthesis; (R)-mevalonate from acetyl-CoA: step 2/3. Functionally, catalyzes the condensation of acetyl-CoA with acetoacetyl-CoA to form 3-hydroxy-3-methylglutaryl-CoA (HMG-CoA). Functions in the mevalonate (MVA) pathway leading to isopentenyl diphosphate (IPP), a key precursor for the biosynthesis of isoprenoid compounds that are building blocks of archaeal membrane lipids. The chain is Hydroxymethylglutaryl-CoA synthase from Thermococcus kodakarensis (strain ATCC BAA-918 / JCM 12380 / KOD1) (Pyrococcus kodakaraensis (strain KOD1)).